The following is a 224-amino-acid chain: Peroxiredoxin-6 (224 aa).

Residues 5–169 enclose the Thioredoxin domain; the sequence is LLLGDEAPNF…ILRVIISLQL (165 aa). A required and sufficient for targeting to lysosomes and lamellar bodies region spans residues 31 to 40; that stretch reads DSWGILFSHP. The residue at position 44 (T44) is a Phosphothreonine. C47 acts as the Cysteine sulfenic acid (-SOH) intermediate; for peroxidase activity in catalysis. Position 63 is an N6-acetyllysine (K63). The residue at position 89 (Y89) is a Phosphotyrosine. D140 (for phospholipase activity) is an active-site residue. Phosphothreonine; by MAPK is present on T177. At K209 the chain carries N6-acetyllysine; alternate. K209 carries the post-translational modification N6-succinyllysine; alternate.

The protein belongs to the peroxiredoxin family. Prx6 subfamily. In terms of assembly, homodimer. Interacts with GSTP1; mediates PRDX6 glutathionylation and regeneration. Interacts with APEX1. Interacts with STH. May interact with FAM168B. May interact with HTR2A. Post-translationally, irreversibly inactivated by overoxidation of Cys-47 to sulfinic acid (Cys-SO(2)H) and sulfonic acid (Cys-SO(3)H) forms upon oxidative stress. In terms of processing, phosphorylation at Thr-177 by MAP kinases increases the phospholipase activity of the enzyme. The phosphorylated form exhibits a greater lysophosphatidylcholine acyltransferase activity compared to the non-phosphorylated form.

The protein localises to the cytoplasm. Its subcellular location is the lysosome. It catalyses the reaction a hydroperoxide + 2 glutathione = an alcohol + glutathione disulfide + H2O. The enzyme catalyses a 1,2-diacyl-sn-glycero-3-phosphocholine + H2O = a 1-acyl-sn-glycero-3-phosphocholine + a fatty acid + H(+). The catalysed reaction is a 1-acyl-sn-glycero-3-phosphocholine + an acyl-CoA = a 1,2-diacyl-sn-glycero-3-phosphocholine + CoA. It carries out the reaction 1-hexadecanoyl-sn-glycero-3-phosphocholine + hexadecanoyl-CoA = 1,2-dihexadecanoyl-sn-glycero-3-phosphocholine + CoA. It catalyses the reaction 1,2-dihexadecanoyl-sn-glycero-3-phosphocholine + H2O = 1-hexadecanoyl-sn-glycero-3-phosphocholine + hexadecanoate + H(+). Functionally, thiol-specific peroxidase that catalyzes the reduction of hydrogen peroxide and organic hydroperoxides to water and alcohols, respectively. Can reduce H(2)O(2) and short chain organic, fatty acid, and phospholipid hydroperoxides. Also has phospholipase activity, and can therefore either reduce the oxidized sn-2 fatty acyl group of phospholipids (peroxidase activity) or hydrolyze the sn-2 ester bond of phospholipids (phospholipase activity). These activities are dependent on binding to phospholipids at acidic pH and to oxidized phospholipds at cytosolic pH. Plays a role in cell protection against oxidative stress by detoxifying peroxides and in phospholipid homeostasis. Exhibits acyl-CoA-dependent lysophospholipid acyltransferase which mediates the conversion of lysophosphatidylcholine (1-acyl-sn-glycero-3-phosphocholine or LPC) into phosphatidylcholine (1,2-diacyl-sn-glycero-3-phosphocholine or PC). Shows a clear preference for LPC as the lysophospholipid and for palmitoyl CoA as the fatty acyl substrate. This is Peroxiredoxin-6 (PRDX6) from Sus scrofa (Pig).